The sequence spans 157 residues: Probable succinate transporter subunit YjjB (157 aa).

The next 5 helical transmembrane spans lie at 8–28, 34–54, 55–75, 87–107, and 129–149; these read LALM…AMVF, ALPW…LMMS, AGFN…SIGI, VFTV…TAMI, and FLKA…PGLW.

The protein belongs to the ThrE exporter (TC 2.A.79) family. In terms of assembly, the transporter is composed of YjjB and YjjP.

The protein localises to the cell inner membrane. Involved in succinate export with YjjP. Both proteins are required for export. This Salmonella typhi protein is Probable succinate transporter subunit YjjB.